The sequence spans 131 residues: Large ribosomal subunit protein uL22 (131 aa).

Basic residues predominate over residues 1–11 (MAKGHRSKIKR). The interval 1-20 (MAKGHRSKIKRERNEVRDTR) is disordered.

It belongs to the universal ribosomal protein uL22 family. In terms of assembly, part of the 50S ribosomal subunit.

In terms of biological role, this protein binds specifically to 23S rRNA; its binding is stimulated by other ribosomal proteins, e.g. L4, L17, and L20. It is important during the early stages of 50S assembly. It makes multiple contacts with different domains of the 23S rRNA in the assembled 50S subunit and ribosome. Its function is as follows. The globular domain of the protein is located near the polypeptide exit tunnel on the outside of the subunit, while an extended beta-hairpin is found that lines the wall of the exit tunnel in the center of the 70S ribosome. The polypeptide is Large ribosomal subunit protein uL22 (Agathobacter rectalis (strain ATCC 33656 / DSM 3377 / JCM 17463 / KCTC 5835 / VPI 0990) (Eubacterium rectale)).